The chain runs to 317 residues: Acetyl-coenzyme A carboxylase carboxyl transferase subunit beta (317 aa).

The tract at residues 1–28 (MANNMTDTMTKFDTNNDSASLQQNGNKA) is disordered. Residues 55 to 317 (PSTKCSSCHS…LCSVPNVDAQ (263 aa)) form the CoA carboxyltransferase N-terminal domain. Zn(2+) is bound by residues Cys59, Cys62, Cys78, and Cys81. The C4-type zinc finger occupies 59–81 (CSSCHSVITNTALIFNCYVCPHC).

The protein belongs to the AccD/PCCB family. In terms of assembly, acetyl-CoA carboxylase is a heterohexamer composed of biotin carboxyl carrier protein (AccB), biotin carboxylase (AccC) and two subunits each of ACCase subunit alpha (AccA) and ACCase subunit beta (AccD). Requires Zn(2+) as cofactor.

It is found in the cytoplasm. It catalyses the reaction N(6)-carboxybiotinyl-L-lysyl-[protein] + acetyl-CoA = N(6)-biotinyl-L-lysyl-[protein] + malonyl-CoA. It participates in lipid metabolism; malonyl-CoA biosynthesis; malonyl-CoA from acetyl-CoA: step 1/1. Component of the acetyl coenzyme A carboxylase (ACC) complex. Biotin carboxylase (BC) catalyzes the carboxylation of biotin on its carrier protein (BCCP) and then the CO(2) group is transferred by the transcarboxylase to acetyl-CoA to form malonyl-CoA. The sequence is that of Acetyl-coenzyme A carboxylase carboxyl transferase subunit beta from Psychrobacter arcticus (strain DSM 17307 / VKM B-2377 / 273-4).